Consider the following 425-residue polypeptide: High-affinity branched-chain amino acid transport system permease protein LivM (425 aa).

11 helical membrane-spanning segments follow: residues 6–26, 45–65, 92–112, 120–140, 145–165, 167–187, 191–211, 260–280, 311–331, 353–373, and 387–407; these read IAMA…FMGV, WQWV…RPAF, FLVA…RGTV, IYII…LLVL, FYAI…LGFW, CLPI…FPVL, GDYL…LLLN, RVIF…FVIN, IKLT…TLFA, IVVL…ILLV, and MLML…GLLP.

The protein belongs to the binding-protein-dependent transport system permease family. LivHM subfamily.

The protein localises to the cell inner membrane. Part of the binding-protein-dependent transport system for branched-chain amino acids. Probably responsible for the translocation of the substrates across the membrane. The polypeptide is High-affinity branched-chain amino acid transport system permease protein LivM (livM) (Escherichia coli (strain K12)).